The following is a 100-amino-acid chain: Urease subunit gamma (100 aa).

The protein belongs to the urease gamma subunit family. Heterotrimer of UreA (gamma), UreB (beta) and UreC (alpha) subunits. Three heterotrimers associate to form the active enzyme.

It is found in the cytoplasm. The catalysed reaction is urea + 2 H2O + H(+) = hydrogencarbonate + 2 NH4(+). The protein operates within nitrogen metabolism; urea degradation; CO(2) and NH(3) from urea (urease route): step 1/1. The protein is Urease subunit gamma of Pseudoalteromonas translucida (strain TAC 125).